Consider the following 1244-residue polypeptide: Alpha-protein kinase 1 (1244 aa).

Residues Phe-61, Gln-67, Arg-116, 150 to 153 (RQAR), Asp-231, Lys-233, 236 to 237 (ST), and Phe-295 each bind ADP-D-glycero-beta-D-manno-heptose. Disordered regions lie at residues 650–675 (LQEP…TPFS), 701–737 (VRNM…THPS), 757–798 (VKDR…TEDA), and 824–848 (NWPV…DPDA). The segment covering 652 to 675 (EPNNDNLEPSQNQPQQQMPLTPFS) has biased composition (polar residues). Residues 713-726 (SRPSYRSASWSSDS) are compositionally biased toward low complexity. Basic and acidic residues predominate over residues 757–771 (VKDRQGKEQGEEISE). A compositionally biased stretch (acidic residues) spans 787-798 (PEGETAESTEDA). One can recognise an Alpha-type protein kinase domain in the interval 1017–1237 (KYSKKSELWT…ICHRLSLTRP (221 aa)).

Belongs to the protein kinase superfamily. Alpha-type protein kinase family. ALPK subfamily. Highly expressed in liver. Expressed in the optic nerve and retinal pigmented epithelium. Lower expression is observed in the macula and extramacular retina.

Its subcellular location is the cytoplasm. The protein resides in the cytosol. The protein localises to the cytoskeleton. It is found in the spindle pole. It localises to the microtubule organizing center. Its subcellular location is the centrosome. The protein resides in the cell projection. The protein localises to the cilium. The catalysed reaction is L-seryl-[protein] + ATP = O-phospho-L-seryl-[protein] + ADP + H(+). It carries out the reaction L-threonyl-[protein] + ATP = O-phospho-L-threonyl-[protein] + ADP + H(+). With respect to regulation, serine/threonine-protein kinase activity is stimulated upon ADP-D-glycero-beta-D-manno-heptose (ADP-Heptose)-binding. In terms of biological role, serine/threonine-protein kinase that detects bacterial pathogen-associated molecular pattern metabolites (PAMPs) and initiates an innate immune response, a critical step for pathogen elimination and engagement of adaptive immunity. Specifically recognizes and binds ADP-D-glycero-beta-D-manno-heptose (ADP-Heptose), a potent PAMP present in all Gram-negative and some Gram-positive bacteria. ADP-Heptose-binding stimulates its kinase activity to phosphorylate and activate TIFA, triggering pro-inflammatory NF-kappa-B signaling. May be involved in monosodium urate monohydrate (MSU)-induced inflammation by mediating phosphorylation of unconventional myosin MYO9A. May also play a role in apical protein transport by mediating phosphorylation of unconventional myosin MYO1A. May play a role in ciliogenesis. The protein is Alpha-protein kinase 1 of Homo sapiens (Human).